The sequence spans 1107 residues: Membrane-associated guanylate kinase, WW and PDZ domain-containing protein 3 (1107 aa).

Positions 17–102 (ECGLSGVGGD…PIRLKTVKPG (86 aa)) constitute a PDZ 1 domain. The region spanning 110 to 284 (RHYLSLQFQK…SMDFRNYLTR (175 aa)) is the Guanylate kinase-like domain. 117–124 (FQKGSIDH) lines the ATP pocket. The tract at residues 210 to 277 (FDTETQRKRT…SYNQTNSSMD (68 aa)) is disordered. The span at 220 to 231 (TSVSKMQRTDSS) shows a compositional bias: polar residues. The span at 232-241 (LPEEEDEEER) shows a compositional bias: acidic residues. Positions 251 to 261 (TDHRDRQEPSE) are enriched in basic and acidic residues. Positions 267–277 (PSYNQTNSSMD) are enriched in polar residues. 2 consecutive WW domains span residues 289 to 322 (EPLPKNWEMAYTEAGMIYFIDHNTKTTTWLDPRL) and 335 to 368 (GELPYGWEKIEDPQYGTYYVDHINQKTQFDNPVL). Residues 374-398 (KQLNPAPSEGTVHQEPENSQFTRDP) form a disordered region. 4 consecutive PDZ domains span residues 407 to 489 (HTSL…TLCR), 577 to 653 (TIPL…LILR), 727 to 809 (DVFL…TVRR), and 853 to 940 (DVIL…IAEE). Residues 941–975 (EHRGPPSGSNSARQSPAPQHRPMGQTQPTYGTLDR) form a disordered region. Positions 947 to 957 (SGSNSARQSPA) are enriched in polar residues. Positions 1003 to 1085 (PVELERGPRG…KVLLLLRPGT (83 aa)) constitute a PDZ 6 domain.

It belongs to the MAGUK family.

It is found in the cell membrane. The protein localises to the cell junction. Its subcellular location is the tight junction. Functionally, acts as a scaffolding protein at cell-cell junctions, thereby regulating various cellular and signaling processes. This chain is Membrane-associated guanylate kinase, WW and PDZ domain-containing protein 3 (magi3), found in Xenopus tropicalis (Western clawed frog).